The primary structure comprises 574 residues: Glutamyl-tRNA(Gln) amidotransferase subunit B, mitochondrial (574 aa).

Belongs to the GatB/GatE family. GatB subfamily. As to quaternary structure, subunit of the heterotrimeric GatCAB amidotransferase (AdT) complex, composed of A, B and C subunits.

It localises to the mitochondrion. The enzyme catalyses L-glutamyl-tRNA(Gln) + L-glutamine + ATP + H2O = L-glutaminyl-tRNA(Gln) + L-glutamate + ADP + phosphate + H(+). Allows the formation of correctly charged Gln-tRNA(Gln) through the transamidation of misacylated Glu-tRNA(Gln) in the mitochondria. The reaction takes place in the presence of glutamine and ATP through an activated gamma-phospho-Glu-tRNA(Gln). This chain is Glutamyl-tRNA(Gln) amidotransferase subunit B, mitochondrial, found in Phytophthora infestans (strain T30-4) (Potato late blight agent).